Reading from the N-terminus, the 113-residue chain is Large ribosomal subunit protein P1z (113 aa).

Residues 87 to 113 form a disordered region; it reads AAAPAKEEKKDEPAEESDGDLGFGLFD. Position 103 is a phosphoserine (serine 103).

The protein belongs to the eukaryotic ribosomal protein P1/P2 family. In terms of assembly, P1 and P2 exist as dimers at the large ribosomal subunit.

Functionally, plays an important role in the elongation step of protein synthesis. The sequence is that of Large ribosomal subunit protein P1z (RPP1B) from Arabidopsis thaliana (Mouse-ear cress).